The chain runs to 737 residues: Autophagy-related protein 22 (737 aa).

Residues 115 to 154 form a disordered region; the sequence is RMSPANAGDNSDSYPYGDDTDGDSSSGLPPPRYPGDDTRP. Residues 125 to 141 show a composition bias toward low complexity; that stretch reads SDSYPYGDDTDGDSSSG. Helical transmembrane passes span 166–186, 232–252, 264–284, and 289–309; these read YAFAAEVYVICGIGSFIPILL, SFAMYTFSVSVLLQALLVVSI, KLLLAFAWIGSACVMAYIFIS, and LIGALLAIISNTSFGASFVLL. Positions 327 to 353 are disordered; it reads GDYGSPGYATTEEGDDEDDEYQEDSTR. Acidic residues predominate over residues 338–349; that stretch reads EEGDDEDDEYQE. An N-linked (GlcNAc...) asparagine glycan is attached at asparagine 354. The chain crosses the membrane as a helical span at residues 395-415; it reads GIGIGYIAGLFLQCVAIAILI. Asparagine 419 is a glycosylation site (N-linked (GlcNAc...) asparagine). 7 consecutive transmembrane segments (helical) span residues 426-446, 487-507, 524-544, 559-579, 593-613, 632-652, and 661-681; these read IVLCVIGAWWAIFTIPAAMWL, LVDIVLFLAGWFLLSDAIATT, WALGMINVISTASGILGAFSW, ILACIALFELIPLYGLMGYLP, WEMYPLAAIYGFVLGGLSGYC, LYAITDKGSSVFGPAIVGAII, and AFWFLAAIVGTPALFIWFINV.

This sequence belongs to the ATG22 family.

Its subcellular location is the vacuole membrane. In terms of biological role, vacuolar effluxer which mediate the efflux of amino acids resulting from autophagic degradation. The release of autophagic amino acids allows the maintenance of protein synthesis and viability during nitrogen starvation. This chain is Autophagy-related protein 22 (apg-11), found in Neurospora crassa (strain ATCC 24698 / 74-OR23-1A / CBS 708.71 / DSM 1257 / FGSC 987).